The following is a 117-amino-acid chain: Holo-[acyl-carrier-protein] synthase (117 aa).

Residues aspartate 6 and glutamate 55 each coordinate Mg(2+).

Belongs to the P-Pant transferase superfamily. AcpS family. The cofactor is Mg(2+).

The protein localises to the cytoplasm. It catalyses the reaction apo-[ACP] + CoA = holo-[ACP] + adenosine 3',5'-bisphosphate + H(+). Transfers the 4'-phosphopantetheine moiety from coenzyme A to a Ser of acyl-carrier-protein. This is Holo-[acyl-carrier-protein] synthase from Chlorobaculum parvum (strain DSM 263 / NCIMB 8327) (Chlorobium vibrioforme subsp. thiosulfatophilum).